A 397-amino-acid polypeptide reads, in one-letter code: MAKEKFERTKPHVNIGTIGHVDHGKTTLTAAITTILAKEGKAKAFNYEEIDKAPEEKERGITINTAHVEYETENRHYAHVDCPGHADYVKNMITGAAQMDGAILVVSAADGPMPQTREHILLASRVGVEYIVVFLNKADQVDDPELIDLVEMEVRELLNEYGFPGDDTPIVVGSALKALQNPDDAEAIKPIKDLMAEVDAYIPTPERPTDKAFLMPIEDVFTITGRGTVATGRVETGTLKVGDEVEIVGMKDEITKVVVTGVEMFRKILDSALAGDNIGALLRGVQREDIERGQVLAKPGSITPHNKFVGQVYVLKKEEGGRHTPFFNGYRPQFYFRTTDVTGSIQLPDGVEMVMPGDHIDMTVELITKVAMGDNLRFAIREGGRTVGSGVVTSIIE.

The tr-type G domain maps to 10-206 (KPHVNIGTIG…EVDAYIPTPE (197 aa)). The tract at residues 19–26 (GHVDHGKT) is G1. 19–26 (GHVDHGKT) provides a ligand contact to GTP. Mg(2+) is bound at residue T26. The tract at residues 60–64 (GITIN) is G2. The tract at residues 81-84 (DCPG) is G3. GTP contacts are provided by residues 81 to 85 (DCPGH) and 136 to 139 (NKAD). A G4 region spans residues 136 to 139 (NKAD). Positions 174 to 176 (SAL) are G5.

This sequence belongs to the TRAFAC class translation factor GTPase superfamily. Classic translation factor GTPase family. EF-Tu/EF-1A subfamily. Monomer.

The protein localises to the cytoplasm. The enzyme catalyses GTP + H2O = GDP + phosphate + H(+). Its function is as follows. GTP hydrolase that promotes the GTP-dependent binding of aminoacyl-tRNA to the A-site of ribosomes during protein biosynthesis. This Clostridium acetobutylicum (strain ATCC 824 / DSM 792 / JCM 1419 / IAM 19013 / LMG 5710 / NBRC 13948 / NRRL B-527 / VKM B-1787 / 2291 / W) protein is Elongation factor Tu.